Here is a 593-residue protein sequence, read N- to C-terminus: DNA primase (593 aa).

A CHC2-type zinc finger spans residues 38–62; the sequence is CPFHQEKTPSFTVSDSKRFFYCFGC. Residues 250 to 332 enclose the Toprim domain; that stretch reads NRSILVEGYF…EKKISFIRLP (83 aa). Mg(2+) is bound by residues Glu-256, Asp-300, and Asp-302.

This sequence belongs to the DnaG primase family. Monomer. Interacts with DnaB. It depends on Zn(2+) as a cofactor. Mg(2+) is required as a cofactor.

The enzyme catalyses ssDNA + n NTP = ssDNA/pppN(pN)n-1 hybrid + (n-1) diphosphate.. Its function is as follows. RNA polymerase that catalyzes the synthesis of short RNA molecules used as primers for DNA polymerase during DNA replication. This chain is DNA primase, found in Rickettsia typhi (strain ATCC VR-144 / Wilmington).